Here is a 137-residue protein sequence, read N- to C-terminus: Universal stress protein HP_0031 (137 aa).

This sequence belongs to the universal stress protein A family.

The chain is Universal stress protein HP_0031 from Helicobacter pylori (strain ATCC 700392 / 26695) (Campylobacter pylori).